We begin with the raw amino-acid sequence, 312 residues long: Olfactory receptor 2L5 (312 aa).

At 1 to 24 (MENYNQTSTDFILLGLFPPSKIGL) the chain is on the extracellular side. Residue N5 is glycosylated (N-linked (GlcNAc...) asparagine). The helical transmembrane segment at 25 to 48 (FLFILFVLIFLMALIGNLSMILLI) threads the bilayer. The Cytoplasmic portion of the chain corresponds to 49 to 56 (FLDTHLHT). Residues 57–78 (PMYFLLSQLSLIDLNYISTIVP) traverse the membrane as a helical segment. The Extracellular segment spans residues 79–99 (KMASDFLYGNKSISFIGCGIQ). C96 and C188 form a disulfide bridge. A helical transmembrane segment spans residues 100 to 119 (SFFFMTFAGAEALLLTSMAY). Residues 120-138 (DRYVAICFPLHYPIRMSKR) lie on the Cytoplasmic side of the membrane. Residues 139–157 (MYVLMITGSWMIGSINSCA) traverse the membrane as a helical segment. The Extracellular portion of the chain corresponds to 158-194 (HTVYAFRIPYCKSRAINHFFCDVPAMLTLACTDTWVY). The chain crosses the membrane as a helical span at residues 195–218 (EYTVFLSSTIFLVFPFTGIACSYG). Over 219–235 (WVLLAVYRMHSAEGRKK) the chain is Cytoplasmic. The helical transmembrane segment at 236–258 (AYSTCSTHLTVVTFYYAPFAYTY) threads the bilayer. At 259–271 (LCPRSLRSLTEDK) the chain is on the extracellular side. A helical membrane pass occupies residues 272 to 291 (VLAVFYTILTPMLNPIIYSL). At 292–312 (RNKEVMGALTRVIQNIFSVKM) the chain is on the cytoplasmic side.

The protein belongs to the G-protein coupled receptor 1 family.

It is found in the cell membrane. Its function is as follows. Odorant receptor. This is Olfactory receptor 2L5 (OR2L5) from Homo sapiens (Human).